A 201-amino-acid chain; its full sequence is Recombination protein RecR (201 aa).

A C4-type zinc finger spans residues 59 to 74 (CEICGNMDTENMCRIC). The Toprim domain occupies 82–177 (SIIAIVETVA…KISRLASGIP (96 aa)).

Belongs to the RecR family.

Functionally, may play a role in DNA repair. It seems to be involved in an RecBC-independent recombinational process of DNA repair. It may act with RecF and RecO. The chain is Recombination protein RecR from Rickettsia africae (strain ESF-5).